A 356-amino-acid chain; its full sequence is Putative methylthioribose-1-phosphate isomerase (356 aa).

Residues 57–59, Arg100, and Gln206 each bind substrate; that span reads RGA. The active-site Proton donor is Asp247. 257 to 258 lines the substrate pocket; that stretch reads NK.

Belongs to the eIF-2B alpha/beta/delta subunits family. MtnA subfamily.

The enzyme catalyses 5-(methylsulfanyl)-alpha-D-ribose 1-phosphate = 5-(methylsulfanyl)-D-ribulose 1-phosphate. Catalyzes the interconversion of methylthioribose-1-phosphate (MTR-1-P) into methylthioribulose-1-phosphate (MTRu-1-P). The polypeptide is Putative methylthioribose-1-phosphate isomerase (aIF-2BI) (Pyrococcus abyssi (strain GE5 / Orsay)).